The chain runs to 243 residues: Cysteine-rich secretory protein 2 (243 aa).

The signal sequence occupies residues 1 to 21; that stretch reads MALLPVLFLVTVLLPSLPAEG. In terms of domain architecture, SCP spans 41-169; the sequence is VNKHNELRKA…SLKYYYVCQY (129 aa). Disulfide bonds link Cys189–Cys196, Cys192–Cys201, Cys205–Cys238, Cys214–Cys232, and Cys223–Cys236. In terms of domain architecture, ShKT spans 205–238; sequence CQYQDLLSNCDSLKNTAGCEHELLKEKCKATCLC.

The protein belongs to the CRISP family. In terms of assembly, interacts with NSUN4 isoform 3. Testis and epididymis.

The protein localises to the secreted. Functionally, may regulate some ion channels' activity and thereby regulate calcium fluxes during sperm capacitation. This chain is Cysteine-rich secretory protein 2 (CRISP2), found in Homo sapiens (Human).